We begin with the raw amino-acid sequence, 226 residues long: 2,3-bisphosphoglycerate-dependent phosphoglycerate mutase (226 aa).

Substrate contacts are provided by residues 8–15, 21–22, Arg-58, 109–112, Lys-120, 136–137, and 180–181; these read RHGQSVWN, TG, ERMY, RR, and GN. His-9 serves as the catalytic Tele-phosphohistidine intermediate. The Proton donor/acceptor role is filled by Glu-109.

It belongs to the phosphoglycerate mutase family. BPG-dependent PGAM subfamily.

The catalysed reaction is (2R)-2-phosphoglycerate = (2R)-3-phosphoglycerate. It participates in carbohydrate degradation; glycolysis; pyruvate from D-glyceraldehyde 3-phosphate: step 3/5. In terms of biological role, catalyzes the interconversion of 2-phosphoglycerate and 3-phosphoglycerate. The protein is 2,3-bisphosphoglycerate-dependent phosphoglycerate mutase of Chlamydia trachomatis serovar A (strain ATCC VR-571B / DSM 19440 / HAR-13).